An 853-amino-acid polypeptide reads, in one-letter code: Vacuolar protein sorting-associated protein 41 homolog (853 aa).

Residues 1 to 25 are compositionally biased toward acidic residues; that stretch reads MAEAEEQETESLEESTDESEEESEE. A disordered region spans residues 1-32; sequence MAEAEEQETESLEESTDESEEESEEEPKLKYE. The interaction with ARL8B stretch occupies residues 1-539; that stretch reads MAEAEEQETE…YLTLRHKDVF (539 aa). The stretch at 567 to 711 is one CHCR repeat; the sequence is VDMLLDNEDK…SIDKPPFITG (145 aa). The segment at 790 to 838 adopts an RING-type; atypical zinc-finger fold; the sequence is CESCLSPILPTDAAKPFSVVVFHCRHMFHKECLPMPSMNAPAQYCNICS.

The protein belongs to the VPS41 family. In terms of assembly, component of the putative homotypic fusion and vacuole protein sorting (HOPS) complex; the core of which composed of the class C Vps proteins VPS11, VPS16, VPS18 and VPS33A, is associated with VPS39 and VPS41. Interacts with RILP, MON1B. Interacts with ARL8B (GTP-bound form); involved in recruitment to lysosomes and probably hierarchial assembly of the HOPS complex at lysosomal membranes. In vitro can self-assemble into a lattice. Associates with adapter protein complex 3 (AP-3) and clathrin:AP-3 complexes. Interacts with STX17; this interaction is increased in the absence of TMEM39A. Interacts with ARL8B and PLEKHM1; the interaction mediates the recruitment of the HOPS complex to lysosomes. Interacts with RAB7, RAB2A and RAB2B. Interacts with RAB39A (GTP-bound) and RAB39B (GTP-bound); interaction with RAB39A leads to a functional HOPS complex that mediates autophagosome-lysosome membrane tethering.

It localises to the endosome membrane. Its subcellular location is the late endosome membrane. The protein localises to the early endosome membrane. The protein resides in the lysosome membrane. It is found in the golgi apparatus. It localises to the trans-Golgi network. Its subcellular location is the cytoplasmic vesicle. The protein localises to the clathrin-coated vesicle. The protein resides in the cytoplasm. It is found in the cytosol. In terms of biological role, plays a role in vesicle-mediated protein trafficking to lysosomal compartments including the endocytic membrane transport and autophagic pathways. Believed to act in part as a core component of the putative HOPS endosomal tethering complex is proposed to be involved in the Rab5-to-Rab7 endosome conversion probably implicating MON1A/B, and via binding SNAREs and SNARE complexes to mediate tethering and docking events during SNARE-mediated membrane fusion. The HOPS complex is proposed to be recruited to Rab7 on the late endosomal membrane and to regulate late endocytic, phagocytic and autophagic traffic towards lysosomes. Involved in homotypic vesicle fusions between late endosomes and in heterotypic fusions between late endosomes and lysosomes implicated in degradation of endocytosed cargo. Required for fusion of autophagosomes with lysosomes. Links the HOPS complex to endosomal via its association with RILP and to lysosomal membranes via its association with ARL8B, suggesting that these interactions may bring the compartments to close proximity for fusion. Involved in the direct trans-Golgi network to late endosomes transport of lysosomal membrane proteins independently of HOPS. Involved in sorting to the regulated secretory pathway presumably implicating the AP-3 adapter complex. May play a role in HOPS-independent function in the regulated secretory pathway. This chain is Vacuolar protein sorting-associated protein 41 homolog (Vps41), found in Mus musculus (Mouse).